A 532-amino-acid polypeptide reads, in one-letter code: Phosphoenolpyruvate carboxykinase (ATP) (532 aa).

Arg60, Tyr194, and Lys200 together coordinate substrate. ATP is bound by residues Lys200, His219, and 237–245; that span reads GLSGTGKTT. Residues Lys200 and His219 each contribute to the Mn(2+) site. Residue Asp258 coordinates Mn(2+). Glu286, Arg324, and Thr449 together coordinate ATP. A substrate-binding site is contributed by Arg324.

The protein belongs to the phosphoenolpyruvate carboxykinase (ATP) family. Mn(2+) is required as a cofactor.

It is found in the cytoplasm. It carries out the reaction oxaloacetate + ATP = phosphoenolpyruvate + ADP + CO2. It participates in carbohydrate biosynthesis; gluconeogenesis. Functionally, involved in the gluconeogenesis. Catalyzes the conversion of oxaloacetate (OAA) to phosphoenolpyruvate (PEP) through direct phosphoryl transfer between the nucleoside triphosphate and OAA. The polypeptide is Phosphoenolpyruvate carboxykinase (ATP) (Ruegeria pomeroyi (strain ATCC 700808 / DSM 15171 / DSS-3) (Silicibacter pomeroyi)).